The following is a 407-amino-acid chain: Arginine biosynthesis bifunctional protein ArgJ (407 aa).

Substrate is bound by residues threonine 154, lysine 180, threonine 191, glutamate 278, asparagine 402, and serine 407. Threonine 191 acts as the Nucleophile in catalysis.

It belongs to the ArgJ family. Heterotetramer of two alpha and two beta chains.

Its subcellular location is the cytoplasm. It catalyses the reaction N(2)-acetyl-L-ornithine + L-glutamate = N-acetyl-L-glutamate + L-ornithine. The enzyme catalyses L-glutamate + acetyl-CoA = N-acetyl-L-glutamate + CoA + H(+). It functions in the pathway amino-acid biosynthesis; L-arginine biosynthesis; L-ornithine and N-acetyl-L-glutamate from L-glutamate and N(2)-acetyl-L-ornithine (cyclic): step 1/1. Its pathway is amino-acid biosynthesis; L-arginine biosynthesis; N(2)-acetyl-L-ornithine from L-glutamate: step 1/4. Its function is as follows. Catalyzes two activities which are involved in the cyclic version of arginine biosynthesis: the synthesis of N-acetylglutamate from glutamate and acetyl-CoA as the acetyl donor, and of ornithine by transacetylation between N(2)-acetylornithine and glutamate. The chain is Arginine biosynthesis bifunctional protein ArgJ from Psychrobacter arcticus (strain DSM 17307 / VKM B-2377 / 273-4).